A 545-amino-acid chain; its full sequence is Chaperonin GroEL (545 aa).

Residues 30–33 (TLGP), K51, 87–91 (DGTTT), G415, and D496 contribute to the ATP site.

This sequence belongs to the chaperonin (HSP60) family. Forms a cylinder of 14 subunits composed of two heptameric rings stacked back-to-back. Interacts with the co-chaperonin GroES.

It is found in the cytoplasm. It carries out the reaction ATP + H2O + a folded polypeptide = ADP + phosphate + an unfolded polypeptide.. In terms of biological role, together with its co-chaperonin GroES, plays an essential role in assisting protein folding. The GroEL-GroES system forms a nano-cage that allows encapsulation of the non-native substrate proteins and provides a physical environment optimized to promote and accelerate protein folding. This is Chaperonin GroEL from Rhodobacter capsulatus (Rhodopseudomonas capsulata).